The following is a 32-amino-acid chain: ATYKVRLLSEAEGIDVTIDCADDVYILDAAEE.

The 2Fe-2S ferredoxin-type domain maps to 3-32 (YKVRLLSEAEGIDVTIDCADDVYILDAAEE).

It belongs to the 2Fe2S plant-type ferredoxin family. Requires [2Fe-2S] cluster as cofactor.

Its subcellular location is the plastid. It is found in the chloroplast. In terms of biological role, ferredoxins are iron-sulfur proteins that transfer electrons in a wide variety of metabolic reactions. This chain is Ferredoxin, found in Porphyridium purpureum (Red alga).